A 91-amino-acid polypeptide reads, in one-letter code: Small ribosomal subunit protein uS19 (91 aa).

The protein belongs to the universal ribosomal protein uS19 family.

In terms of biological role, protein S19 forms a complex with S13 that binds strongly to the 16S ribosomal RNA. The sequence is that of Small ribosomal subunit protein uS19 from Prochlorococcus marinus (strain NATL1A).